Reading from the N-terminus, the 272-residue chain is PHD finger protein ALFIN-LIKE 6 (272 aa).

The span at 1-23 shows a compositional bias: gly residues; the sequence is MEGGGGGGGGGGGGGGGGGGGGA. Disordered stretches follow at residues 1-24 and 162-218; these read MEGG…GGAP and QAKE…DNTL. Residues 168-182 show a composition bias toward low complexity; the sequence is PNSSSKSNKPSSKVQ. Residues 183 to 200 show a composition bias toward basic and acidic residues; the sequence is SKAESRSKSKLSAPKDEE. Residues 201–214 show a composition bias toward acidic residues; the sequence is GSGDDEGEEEEDDH. The segment at 216-268 adopts a PHD-type zinc-finger fold; it reads NTLCGTCGTNDGKDEFWICCDNCEKWYHGKCVKITPARAEHIKQYKCPDCTNK.

This sequence belongs to the Alfin family.

It localises to the nucleus. In terms of biological role, histone-binding component that specifically recognizes H3 tails trimethylated on 'Lys-4' (H3K4me3), which mark transcription start sites of virtually all active genes. This chain is PHD finger protein ALFIN-LIKE 6, found in Oryza sativa subsp. indica (Rice).